A 577-amino-acid polypeptide reads, in one-letter code: Outer spore wall assembly protein SHE10 (577 aa).

Positions 1–23 are cleaved as a signal peptide; it reads MGKLIKLITTLTVLVSLLQYCCE. Coiled-coil stretches lie at residues 379-416 and 513-561; these read NETR…ENVE and ILRS…EEDV. The span at 525 to 545 shows a compositional bias: basic and acidic residues; that stretch reads RERKERERKEREKAAAEEFQR. The interval 525-577 is disordered; that stretch reads RERKERERKEREKAAAEEFQRQQELLRQQEEEDEEDVSYTSTSTITTTTTMTL. Residues 562-577 are compositionally biased toward low complexity; the sequence is SYTSTSTITTTTTMTL.

This sequence belongs to the SHE10 family. Component of the mitochondria-localized RNase mitochondrial RNA-processing (RNase MRP) composed of one single RNA encoded by the NME1 gene and at least 31 proteins. Absent in the nucleus-localized RNase MRP (NuMRP).

Its subcellular location is the mitochondrion. Functionally, involved in spore wall assembly. May be a component of the mitochondrial RNase MRP (MtMRP), a ribonucleoprotein endoribonuclease involved in the cleaving RNA transcripts to generate primers for DNA replication in mitochondria. The protein is Outer spore wall assembly protein SHE10 of Saccharomyces cerevisiae (strain Lalvin EC1118 / Prise de mousse) (Baker's yeast).